A 354-amino-acid polypeptide reads, in one-letter code: Methylthioribose-1-phosphate isomerase (354 aa).

Substrate-binding positions include 49–51 (RGA), arginine 92, and glutamine 199. The active-site Proton donor is aspartate 240. 250–251 (NK) contributes to the substrate binding site.

This sequence belongs to the eIF-2B alpha/beta/delta subunits family. MtnA subfamily.

The enzyme catalyses 5-(methylsulfanyl)-alpha-D-ribose 1-phosphate = 5-(methylsulfanyl)-D-ribulose 1-phosphate. The protein operates within amino-acid biosynthesis; L-methionine biosynthesis via salvage pathway; L-methionine from S-methyl-5-thio-alpha-D-ribose 1-phosphate: step 1/6. In terms of biological role, catalyzes the interconversion of methylthioribose-1-phosphate (MTR-1-P) into methylthioribulose-1-phosphate (MTRu-1-P). In Koribacter versatilis (strain Ellin345), this protein is Methylthioribose-1-phosphate isomerase.